The chain runs to 294 residues: Phosphoribosylaminoimidazole-succinocarboxamide synthase (294 aa).

It belongs to the SAICAR synthetase family.

The enzyme catalyses 5-amino-1-(5-phospho-D-ribosyl)imidazole-4-carboxylate + L-aspartate + ATP = (2S)-2-[5-amino-1-(5-phospho-beta-D-ribosyl)imidazole-4-carboxamido]succinate + ADP + phosphate + 2 H(+). Its pathway is purine metabolism; IMP biosynthesis via de novo pathway; 5-amino-1-(5-phospho-D-ribosyl)imidazole-4-carboxamide from 5-amino-1-(5-phospho-D-ribosyl)imidazole-4-carboxylate: step 1/2. The chain is Phosphoribosylaminoimidazole-succinocarboxamide synthase from Rhodococcus jostii (strain RHA1).